The chain runs to 272 residues: L-aspartate dehydrogenase 3 (272 aa).

2 residues coordinate NAD(+): Ala126 and Asn194. Residue His224 is part of the active site.

Belongs to the L-aspartate dehydrogenase family.

The enzyme catalyses L-aspartate + NADP(+) + H2O = oxaloacetate + NH4(+) + NADPH + H(+). It catalyses the reaction L-aspartate + NAD(+) + H2O = oxaloacetate + NH4(+) + NADH + H(+). Its pathway is cofactor biosynthesis; NAD(+) biosynthesis; iminoaspartate from L-aspartate (dehydrogenase route): step 1/1. Functionally, specifically catalyzes the NAD or NADP-dependent dehydrogenation of L-aspartate to iminoaspartate. The sequence is that of L-aspartate dehydrogenase 3 from Bordetella bronchiseptica (strain ATCC BAA-588 / NCTC 13252 / RB50) (Alcaligenes bronchisepticus).